The chain runs to 549 residues: MDYMKLGLKSRKTGIDVKQDIPKDEYSMENIDDFFKDDETSLISMRRKSRRKSSLFLPSTLNGDTKNVLPPFLQSYKSQDDEVVQSPSGKGDGSRRSSLLSHQSNFLSPANDFEPIEEEPEQEENDIRGNDFATPITQKLSKPTYKRKYSTRYSLDTSESPSVRLTPDRITNKNVYSDVPDLVADEDDDDRVNTSLNTSDNALLEDELEDDGFIPESEEDGDYIESDSSLDSGSDSASDSDGDNTYQEVEEEAEVNTNDNEDDYIRRQASDVVRTDSIIDRNGLRKSTRVKVAPLQYWRNEKIVYKRKSNKPVLDIDKIVTYDESEDEEEILAAQRRKKQKKKPTPTRPYNYVPTGRPRGRPKKDPNAKENLIPEDPNEDIIERIESGGIENGEWLKHGILEANVKISDTKEETKDEIIAFAPNLSQTEQVKDTKDENFALEIMFDKHKEYFASGILKLPAISGQKKLSNSFRTYITFHVIQGIVEVTVCKNKFLSVKGSTFQIPAFNEYAIANRGNDEAKMFFVQVTVSEDANDDNDKELDSTFDTFG.

A disordered region spans residues 47-275 (RKSRRKSSLF…RRQASDVVRT (229 aa)). Composition is skewed to polar residues over residues 56 to 65 (FLPSTLNGDT) and 96 to 108 (RSSLLSHQSNFLS). Over residues 114–124 (EPIEEEPEQEE) the composition is skewed to acidic residues. Polar residues predominate over residues 151 to 163 (TRYSLDTSESPSV). Over residues 203 to 225 (LLEDELEDDGFIPESEEDGDYIE) the composition is skewed to acidic residues. A compositionally biased stretch (low complexity) spans 226–237 (SDSSLDSGSDSA). Acidic residues predominate over residues 238–262 (SDSDGDNTYQEVEEEAEVNTNDNED). The segment covering 263-275 (DYIRRQASDVVRT) has biased composition (basic and acidic residues). The residue at position 325 (S325) is a Phosphoserine. The segment covering 335 to 345 (QRRKKQKKKPT) has biased composition (basic residues). Positions 335–374 (QRRKKQKKKPTPTRPYNYVPTGRPRGRPKKDPNAKENLIP) are disordered. The segment at residues 356–364 (GRPRGRPKK) is a DNA-binding region (a.T hook).

It belongs to the CENP-C/MIF2 family. As to quaternary structure, component of the inner kinetochore constitutive centromere-associated network (CCAN) (also known as central kinetochore CTF19 complex in yeast), which is composed of at least AME1, CHL4, CNN1, CTF3, CTF19, IML3, MCM16, MCM21, MCM22, MHF1, MHF2, MIF2, NKP1, NKP2, OKP1 and WIP1. Interacts with CBF1.

The protein resides in the nucleus. The protein localises to the chromosome. It localises to the centromere. It is found in the kinetochore. Component of the kinetochore, a multiprotein complex that assembles on centromeric DNA and attaches chromosomes to spindle microtubules, mediating chromosome segregation and sister chromatid segregation during meiosis and mitosis. Component of the inner kinetochore constitutive centromere-associated network (CCAN), which serves as a structural platform for outer kinetochore assembly. The polypeptide is Inner kinetochore subunit MIF2 (MIF2) (Saccharomyces cerevisiae (strain ATCC 204508 / S288c) (Baker's yeast)).